We begin with the raw amino-acid sequence, 1035 residues long: MSDIRLDSATFFKRAAKIFDSWEKPSGDTQALEDINSIAIILGDPNDEVASYTKTTALQLWLLGYEFPSTLMVFEKSPRKVTFVCGSSKAKLIRQLQPSDGIEIDVKVRSKDATAAKETMEEVVASLNGKFGSLPKDRPIGKLVDEWNSAVESKSDLEVVDVAIPISAVLAEKDGEELKTIITSAKLTSTVMINYFKSKMESIIDRGTKMSHEALAQLVEEKIGNEEKGPDMKLWNKNPSLGEIDFASSEFVYSPVIQSGGKYDLKVTAASNNDNLKPGIILANMGIRYKNYCSNMGRTFLISPSKKQETQYTTLLEVRKEALALLKTGAVASDVYNSVHQSLETKNATLADSFLKNLGFATGMEYRDSSFLLNAKNNRELKENMVLVLTIGVADLPDAKNKGKTYSLLLSDTVKIGQNGAVVLTEGCTRLSDVVMDMEEEEEEDVKPQIDKKPKINNSPKKPRSSTVGGRVLNAKTRGANREQATQTTAEKIKTNQQRLHAQLNADGVKRWEADAGGKNGAQQKVVKRYESYRREEQLPRAVEDRRIYVDEQRQSVVLPINGYAVPYHISTIKNVTKTEESNHMVLRINFQSPGQIAGKKEDMPFEDPDANFIRSVSFRSQDQRHMLKVYEAITALKKAAVKRETERKELADVIEQEKLIEVKGRHPYVLKNVFPRPGPEGKKTDGNVEIHQNGIRFRPDGPASKIDILFSNIKHLFFQPSEKELIVIIHVHLKAPIMLGKKKTSDVQFYREVADMSFDETGGKKRRARYGDEDEIEQEQEDRKRRAELDKLFHDFARRIETAAQAQQFELEVDVPFRELGFNGVPHKSIVALLPTTNCLIHISELPFTVITLSEVEIVHLERVQFGLKNFDMVFVLQDLKKPPVHINSIPVAHLDNVKEWLDSCDVPISEGPVNLSWPAIMKTVNEDPHAFYAEGGWNFLTGSGSDDGSEESEEGSEFEGDSDVFDESSGSDEDSESAFEGDSDSASAESLSDEGEDWDELERKAKRADEKHRTDRGGDSDDDGKKKKKGSRR.

Residues 440–471 (EEEEEDVKPQIDKKPKINNSPKKPRSSTVGGR) are disordered. Residues 637 to 657 (LKKAAVKRETERKELADVIEQ) adopt a coiled-coil conformation. The segment at 944 to 1035 (GSGSDDGSEE…GKKKKKGSRR (92 aa)) is disordered. Acidic residues-rich tracts occupy residues 949 to 985 (DGSE…EGDS) and 993 to 1002 (LSDEGEDWDE). A compositionally biased stretch (basic and acidic residues) spans 1003 to 1027 (LERKAKRADEKHRTDRGGDSDDDGK).

It belongs to the peptidase M24 family. SPT16 subfamily. Forms a stable heterodimer with POB3. The SPT16-POB3 dimer weakly associates with multiple molecules of NHP6 to form the FACT complex.

It localises to the nucleus. It is found in the chromosome. Functionally, component of the FACT complex, a general chromatin factor that acts to reorganize nucleosomes. The FACT complex is involved in multiple processes that require DNA as a template such as mRNA elongation, DNA replication and DNA repair. During transcription elongation the FACT complex acts as a histone chaperone that both destabilizes and restores nucleosomal structure. It facilitates the passage of RNA polymerase II and transcription by promoting the dissociation of one histone H2A-H2B dimer from the nucleosome, then subsequently promotes the reestablishment of the nucleosome following the passage of RNA polymerase II. In Cryptococcus neoformans var. neoformans serotype D (strain B-3501A) (Filobasidiella neoformans), this protein is FACT complex subunit SPT16 (SPT16).